Consider the following 186-residue polypeptide: Ribosome maturation factor RimM (186 aa).

Residues 103–174 form the PRC barrel domain; sequence PEEYHYSDLI…ELQVQPPPGL (72 aa).

Belongs to the RimM family. In terms of assembly, binds ribosomal protein uS19.

It localises to the cytoplasm. An accessory protein needed during the final step in the assembly of 30S ribosomal subunit, possibly for assembly of the head region. Essential for efficient processing of 16S rRNA. May be needed both before and after RbfA during the maturation of 16S rRNA. It has affinity for free ribosomal 30S subunits but not for 70S ribosomes. This Synechococcus sp. (strain JA-3-3Ab) (Cyanobacteria bacterium Yellowstone A-Prime) protein is Ribosome maturation factor RimM.